The chain runs to 272 residues: Outer surface protein A (272 aa).

The signal sequence occupies residues 1–16 (MKKYLLGIGLILALIA). Residue C17 is the site of N-palmitoyl cysteine attachment. C17 carries the S-diacylglycerol cysteine lipid modification.

This sequence belongs to the OspA lipoprotein family.

It is found in the cell outer membrane. The protein localises to the cell surface. The sequence is that of Outer surface protein A from Borreliella burgdorferi (Lyme disease spirochete).